We begin with the raw amino-acid sequence, 205 residues long: Small ribosomal subunit protein uS4B (205 aa).

An S4 RNA-binding domain is found at 94–157 (RRLDNVVFRA…LNLPIVLGTL (64 aa)).

This sequence belongs to the universal ribosomal protein uS4 family. In terms of assembly, part of the 30S ribosomal subunit. Contacts protein S5. The interaction surface between S4 and S5 is involved in control of translational fidelity.

One of the primary rRNA binding proteins, it binds directly to 16S rRNA where it nucleates assembly of the body of the 30S subunit. Its function is as follows. With S5 and S12 plays an important role in translational accuracy. The polypeptide is Small ribosomal subunit protein uS4B (Nitrosomonas europaea (strain ATCC 19718 / CIP 103999 / KCTC 2705 / NBRC 14298)).